The following is a 208-amino-acid chain: Meiotically up-regulated gene 9 protein (208 aa).

The tract at residues 77–114 (VPASNEKAARVSNLKTVPSLKRENKEVNANSKPPVKQQ) is disordered.

Has a role in meiosis. The protein is Meiotically up-regulated gene 9 protein (mug9) of Schizosaccharomyces pombe (strain 972 / ATCC 24843) (Fission yeast).